The chain runs to 127 residues: Large ribosomal subunit protein bL19 (127 aa).

This sequence belongs to the bacterial ribosomal protein bL19 family.

This protein is located at the 30S-50S ribosomal subunit interface and may play a role in the structure and function of the aminoacyl-tRNA binding site. The chain is Large ribosomal subunit protein bL19 from Ruegeria pomeroyi (strain ATCC 700808 / DSM 15171 / DSS-3) (Silicibacter pomeroyi).